Here is a 194-residue protein sequence, read N- to C-terminus: ATP-dependent Clp protease proteolytic subunit (194 aa).

Catalysis depends on Ser-98, which acts as the Nucleophile. The active site involves His-123.

This sequence belongs to the peptidase S14 family. As to quaternary structure, fourteen ClpP subunits assemble into 2 heptameric rings which stack back to back to give a disk-like structure with a central cavity, resembling the structure of eukaryotic proteasomes.

It is found in the cytoplasm. The enzyme catalyses Hydrolysis of proteins to small peptides in the presence of ATP and magnesium. alpha-casein is the usual test substrate. In the absence of ATP, only oligopeptides shorter than five residues are hydrolyzed (such as succinyl-Leu-Tyr-|-NHMec, and Leu-Tyr-Leu-|-Tyr-Trp, in which cleavage of the -Tyr-|-Leu- and -Tyr-|-Trp bonds also occurs).. Functionally, cleaves peptides in various proteins in a process that requires ATP hydrolysis. Has a chymotrypsin-like activity. Plays a major role in the degradation of misfolded proteins. This is ATP-dependent Clp protease proteolytic subunit from Clostridium botulinum (strain Loch Maree / Type A3).